A 90-amino-acid polypeptide reads, in one-letter code: Molybdopterin synthase sulfur carrier subunit (90 aa).

1-thioglycine; alternate is present on glycine 90. The residue at position 90 (glycine 90) is a Glycyl adenylate; alternate.

The protein belongs to the MoaD family. MOCS2A subfamily. Heterotetramer; composed of 2 small (Mocs2A) and 2 large (Mocs2B) subunits. In terms of processing, C-terminal thiocarboxylation occurs in 2 steps, it is first acyl-adenylated (-COAMP) via the hesA/moeB/thiF part of MOCS3, then thiocarboxylated (-COSH) via the rhodanese domain of MOCS3.

The protein resides in the cytoplasm. It participates in cofactor biosynthesis; molybdopterin biosynthesis. Acts as a sulfur carrier required for molybdopterin biosynthesis. Component of the molybdopterin synthase complex that catalyzes the conversion of precursor Z into molybdopterin by mediating the incorporation of 2 sulfur atoms into precursor Z to generate a dithiolene group. In the complex, serves as sulfur donor by being thiocarboxylated (-COSH) at its C-terminus by MOCS3. After interaction with Mocs2B, the sulfur is then transferred to precursor Z to form molybdopterin. The chain is Molybdopterin synthase sulfur carrier subunit from Drosophila ananassae (Fruit fly).